Reading from the N-terminus, the 145-residue chain is uncharacterized protein (145 aa).

This sequence to B.subtilis XkdJ.

This is an uncharacterized protein from Bacillus subtilis (strain 168).